The primary structure comprises 582 residues: External alternative NADH-ubiquinone oxidoreductase, mitochondrial (582 aa).

Residues Met-1–Phe-30 constitute a mitochondrion transit peptide. Residues Lys-46–His-65 are disordered. A compositionally biased stretch (basic and acidic residues) spans His-54 to His-65. Thr-114–Arg-144 is a binding site for FAD. Leu-277 to Asp-313 is a binding site for NAD(+). Positions Leu-454–Ser-501 form a coiled coil.

It belongs to the NADH dehydrogenase family. The cofactor is FAD.

Its subcellular location is the mitochondrion inner membrane. It catalyses the reaction a quinone + NADH + H(+) = a quinol + NAD(+). The enzyme catalyses a ubiquinone + NADH + H(+) = a ubiquinol + NAD(+). Functionally, alternative NADH-ubiquinone oxidoreductase which catalyzes the oxidation of mitochondrial NADH does not translocate protons across the inner mitochondrial membrane. This Yarrowia lipolytica (strain CLIB 122 / E 150) (Yeast) protein is External alternative NADH-ubiquinone oxidoreductase, mitochondrial (NDH2).